The chain runs to 339 residues: Methionine import ATP-binding protein MetN 1 (339 aa).

The ABC transporter domain maps to 2–241 (ISFNNVSKVY…PKTKTTQNFV (240 aa)). 38 to 45 (GFSGAGKS) is a binding site for ATP.

The protein belongs to the ABC transporter superfamily. Methionine importer (TC 3.A.1.24) family. As to quaternary structure, the complex is composed of two ATP-binding proteins (MetN), two transmembrane proteins (MetI) and a solute-binding protein (MetQ).

The protein resides in the cell membrane. The catalysed reaction is L-methionine(out) + ATP + H2O = L-methionine(in) + ADP + phosphate + H(+). It carries out the reaction D-methionine(out) + ATP + H2O = D-methionine(in) + ADP + phosphate + H(+). Part of the ABC transporter complex MetNIQ involved in methionine import. Responsible for energy coupling to the transport system. The protein is Methionine import ATP-binding protein MetN 1 of Bacillus thuringiensis subsp. konkukian (strain 97-27).